The sequence spans 162 residues: Caveolin-2 (162 aa).

The Cytoplasmic portion of the chain corresponds to 1–86 (MGLETEKADV…FEVSKYVIYK (86 aa)). Y19 is subject to Phosphotyrosine; by SRC. 2 positions are modified to phosphoserine: S20 and S23. Position 27 is a phosphotyrosine; by SRC (Y27). The helical intramembrane region spans 87–107 (FLTLFLAIPLAFAAGILFATL). Topologically, residues 108–162 (SCLHIWIVMPFVKTCLMVLPSVQTIWKSVTDVVIAPLCASVGRSFSSVSMQLSRD) are cytoplasmic.

This sequence belongs to the caveolin family. As to quaternary structure, monomer or homodimer. Interacts with CAV1; the interaction forms a stable heterooligomeric complex that is required for targeting to lipid rafts and for caveolae formation. Tyrosine phosphorylated forms do not form heterooligomers with the Tyr-19-phosphorylated form existing as a monomer or dimer, and the Tyr-27-form as a monomer only. Interacts (tyrosine phosphorylated form) with the SH2 domain-containing proteins, RASA1, NCK1 and SRC. Interacts (tyrosine phosphorylated form) with INSR, the interaction (Tyr-27-phosphorylated form) is increased on insulin stimulation. Interacts (Tyr-19 phosphorylated form) with MAPK1 (phosphorylated form); the interaction, promoted by insulin, leads to nuclear location and MAPK1 activation. Interacts with STAT3; the interaction is increased on insulin-induced tyrosine phosphorylation leading to STAT activation. Post-translationally, phosphorylated on serine and tyrosine residues. CAV1 promotes phosphorylation on Ser-23 which then targets the complex to the plasma membrane, lipid rafts and caveolae. Phosphorylation on both Tyr-19 and Tyr-27 is required for insulin-induced 'Ser-727' phosphorylation of STAT3 and its activation. Phosphorylation on Tyr-19 is required for insulin-induced phosphorylation of MAPK1 and DNA binding of STAT3. Tyrosine phosphorylation is induced by both EGF and insulin.

It is found in the nucleus. The protein localises to the cytoplasm. Its subcellular location is the golgi apparatus membrane. The protein resides in the cell membrane. It localises to the membrane. It is found in the caveola. In terms of biological role, may act as a scaffolding protein within caveolar membranes. Interacts directly with G-protein alpha subunits and can functionally regulate their activity. Acts as an accessory protein in conjunction with CAV1 in targeting to lipid rafts and driving caveolae formation. Positive regulator of cellular mitogenesis of the MAPK signaling pathway. Required for the insulin-stimulated nuclear translocation and activation of MAPK1 and STAT3, and the subsequent regulation of cell cycle progression. In Rhinolophus ferrumequinum (Greater horseshoe bat), this protein is Caveolin-2 (CAV2).